Here is an 81-residue protein sequence, read N- to C-terminus: Short neurotoxin D (81 aa).

The first 21 residues, 1 to 21, serve as a signal peptide directing secretion; sequence MKTLLLTLVVVTIVCLDLGYT. 4 cysteine pairs are disulfide-bonded: Cys-24/Cys-43, Cys-38/Cys-60, Cys-62/Cys-73, and Cys-74/Cys-79.

The protein belongs to the three-finger toxin family. Short-chain subfamily. Type I alpha-neurotoxin sub-subfamily. Expressed by the venom gland.

It is found in the secreted. Functionally, binds to muscle nicotinic acetylcholine receptor (nAChR) and inhibit acetylcholine from binding to the receptor, thereby impairing neuromuscular transmission. This is Short neurotoxin D from Aipysurus laevis (Olive sea snake).